The following is a 201-amino-acid chain: Arachin 25 kDa protein (201 aa).

As to quaternary structure, this is one of six apparently different protein chains that constitute the peanut protein arachin.

In Arachis hypogaea (Peanut), this protein is Arachin 25 kDa protein.